The following is a 413-amino-acid chain: Multifunctional CCA protein (413 aa).

Glycine 8 and arginine 11 together coordinate ATP. Glycine 8 and arginine 11 together coordinate CTP. Residues aspartate 21 and aspartate 23 each coordinate Mg(2+). Arginine 91, arginine 137, and arginine 140 together coordinate ATP. Positions 91, 137, and 140 each coordinate CTP. One can recognise an HD domain in the interval 228–329 (TGVHTLMTLS…VKLFDAIDAW (102 aa)).

The protein belongs to the tRNA nucleotidyltransferase/poly(A) polymerase family. Bacterial CCA-adding enzyme type 1 subfamily. In terms of assembly, monomer. Can also form homodimers and oligomers. The cofactor is Mg(2+). It depends on Ni(2+) as a cofactor.

It carries out the reaction a tRNA precursor + 2 CTP + ATP = a tRNA with a 3' CCA end + 3 diphosphate. The catalysed reaction is a tRNA with a 3' CCA end + 2 CTP + ATP = a tRNA with a 3' CCACCA end + 3 diphosphate. Its function is as follows. Catalyzes the addition and repair of the essential 3'-terminal CCA sequence in tRNAs without using a nucleic acid template. Adds these three nucleotides in the order of C, C, and A to the tRNA nucleotide-73, using CTP and ATP as substrates and producing inorganic pyrophosphate. tRNA 3'-terminal CCA addition is required both for tRNA processing and repair. Also involved in tRNA surveillance by mediating tandem CCA addition to generate a CCACCA at the 3' terminus of unstable tRNAs. While stable tRNAs receive only 3'-terminal CCA, unstable tRNAs are marked with CCACCA and rapidly degraded. This chain is Multifunctional CCA protein, found in Salmonella typhi.